The sequence spans 243 residues: Uba3-binding protein but1 (243 aa).

The disordered stretch occupies residues 28-50 (KSTKKRRSSTKDEETRGMHPHIK).

Homodimer. Interacts with but2 and uba3.

It localises to the nucleus. Functionally, acts as a negative regulator of the NEDD8 pathway. Has a role in meiosis. In Schizosaccharomyces pombe (strain 972 / ATCC 24843) (Fission yeast), this protein is Uba3-binding protein but1 (but1).